A 212-amino-acid polypeptide reads, in one-letter code: Phosphatidylserine decarboxylase proenzyme (212 aa).

Serine 182 acts as the Schiff-base intermediate with substrate; via pyruvic acid in catalysis. The residue at position 182 (serine 182) is a Pyruvic acid (Ser); by autocatalysis.

The protein belongs to the phosphatidylserine decarboxylase family. PSD-A subfamily. Heterodimer of a large membrane-associated beta subunit and a small pyruvoyl-containing alpha subunit. Pyruvate serves as cofactor. Post-translationally, is synthesized initially as an inactive proenzyme. Formation of the active enzyme involves a self-maturation process in which the active site pyruvoyl group is generated from an internal serine residue via an autocatalytic post-translational modification. Two non-identical subunits are generated from the proenzyme in this reaction, and the pyruvate is formed at the N-terminus of the alpha chain, which is derived from the carboxyl end of the proenzyme. The post-translation cleavage follows an unusual pathway, termed non-hydrolytic serinolysis, in which the side chain hydroxyl group of the serine supplies its oxygen atom to form the C-terminus of the beta chain, while the remainder of the serine residue undergoes an oxidative deamination to produce ammonia and the pyruvoyl prosthetic group on the alpha chain.

It is found in the cell membrane. It catalyses the reaction a 1,2-diacyl-sn-glycero-3-phospho-L-serine + H(+) = a 1,2-diacyl-sn-glycero-3-phosphoethanolamine + CO2. It functions in the pathway phospholipid metabolism; phosphatidylethanolamine biosynthesis; phosphatidylethanolamine from CDP-diacylglycerol: step 2/2. Its function is as follows. Catalyzes the formation of phosphatidylethanolamine (PtdEtn) from phosphatidylserine (PtdSer). The polypeptide is Phosphatidylserine decarboxylase proenzyme (Paraburkholderia xenovorans (strain LB400)).